A 195-amino-acid chain; its full sequence is Holliday junction branch migration complex subunit RuvA (195 aa).

The segment at 1–64 (MIASIRGIIQ…EDALTLYGFS (64 aa)) is domain I. Residues 65–142 (DPAQRNLFEQ…DLRQLSGTTP (78 aa)) form a domain II region. Residues 143–151 (GNVSTLDRE) are flexible linker. Residues 151-195 (ELTDILISLGYSATEAAAAIAALPGDAPPTLEERLRLALRYFGSA) form a domain III region.

The protein belongs to the RuvA family. Homotetramer. Forms an RuvA(8)-RuvB(12)-Holliday junction (HJ) complex. HJ DNA is sandwiched between 2 RuvA tetramers; dsDNA enters through RuvA and exits via RuvB. An RuvB hexamer assembles on each DNA strand where it exits the tetramer. Each RuvB hexamer is contacted by two RuvA subunits (via domain III) on 2 adjacent RuvB subunits; this complex drives branch migration. In the full resolvosome a probable DNA-RuvA(4)-RuvB(12)-RuvC(2) complex forms which resolves the HJ.

The protein localises to the cytoplasm. In terms of biological role, the RuvA-RuvB-RuvC complex processes Holliday junction (HJ) DNA during genetic recombination and DNA repair, while the RuvA-RuvB complex plays an important role in the rescue of blocked DNA replication forks via replication fork reversal (RFR). RuvA specifically binds to HJ cruciform DNA, conferring on it an open structure. The RuvB hexamer acts as an ATP-dependent pump, pulling dsDNA into and through the RuvAB complex. HJ branch migration allows RuvC to scan DNA until it finds its consensus sequence, where it cleaves and resolves the cruciform DNA. The polypeptide is Holliday junction branch migration complex subunit RuvA (Chloroflexus aurantiacus (strain ATCC 29364 / DSM 637 / Y-400-fl)).